Reading from the N-terminus, the 944-residue chain is Putative alpha,alpha-trehalose-phosphate synthase [UDP-forming] 106 kDa subunit (944 aa).

Residues 73 to 84 (TNAQSNIATPSP) are compositionally biased toward polar residues. Disordered stretches follow at residues 73 to 113 (TNAQ…NSLS) and 129 to 166 (SKND…SELE). Over residues 101–113 (PSSDSPSLENSLS) the composition is skewed to low complexity. A phosphoserine mark is found at serine 141, serine 145, serine 149, serine 150, serine 163, and serine 177. The interval 173-652 (SRSLSFSMNG…AVTFQSLIKE (480 aa)) is glycosyltransferase. Threonine 189 bears the Phosphothreonine mark.

It in the N-terminal section; belongs to the glycosyltransferase 20 family.

It catalyses the reaction D-glucose 6-phosphate + UDP-alpha-D-glucose = alpha,alpha-trehalose 6-phosphate + UDP + H(+). The polypeptide is Putative alpha,alpha-trehalose-phosphate synthase [UDP-forming] 106 kDa subunit (Schizosaccharomyces pombe (strain 972 / ATCC 24843) (Fission yeast)).